The primary structure comprises 439 residues: Glutamate-1-semialdehyde 2,1-aminomutase (439 aa).

Lys-273 is subject to N6-(pyridoxal phosphate)lysine.

The protein belongs to the class-III pyridoxal-phosphate-dependent aminotransferase family. HemL subfamily. As to quaternary structure, homodimer. The cofactor is pyridoxal 5'-phosphate.

The protein localises to the cytoplasm. The enzyme catalyses (S)-4-amino-5-oxopentanoate = 5-aminolevulinate. It participates in porphyrin-containing compound metabolism; protoporphyrin-IX biosynthesis; 5-aminolevulinate from L-glutamyl-tRNA(Glu): step 2/2. This chain is Glutamate-1-semialdehyde 2,1-aminomutase, found in Paenarthrobacter aurescens (strain TC1).